Here is a 370-residue protein sequence, read N- to C-terminus: MSIHQSPIKRRESKKIWVGNVAVGGDAPISVQSMTNTRTTDVEATVAQIKSLERVGADIVRVSVPTMDAAEAFKVIKQQVNVPLVADIHFDYRIALKVAEYGVDCLRINPGNIGNEERIRAVVDCAKDKNIPIRIGVNAGSLERDLQEKYGEPTPQALLESALRHVDILDRFNFENFKVSVKASDVFLAVESYRLLAKQIVQPLHLGITEAGGARAGSVKSAVGLGLLLSEGIGDTLRISLAADPVEEVKVGFDILKSLRIRSRGINFIACPTCSRQEIDVIATVNALEQRLEDILTPMDVSIIGCVVNGPGEALISDLGVTGSNKMSGFYLDGVRQKERFDNEKLIDQLEAKIRARVAEQHNRIQIEQI.

4 residues coordinate [4Fe-4S] cluster: cysteine 271, cysteine 274, cysteine 306, and glutamate 313.

The protein belongs to the IspG family. It depends on [4Fe-4S] cluster as a cofactor.

It catalyses the reaction (2E)-4-hydroxy-3-methylbut-2-enyl diphosphate + oxidized [flavodoxin] + H2O + 2 H(+) = 2-C-methyl-D-erythritol 2,4-cyclic diphosphate + reduced [flavodoxin]. The protein operates within isoprenoid biosynthesis; isopentenyl diphosphate biosynthesis via DXP pathway; isopentenyl diphosphate from 1-deoxy-D-xylulose 5-phosphate: step 5/6. In terms of biological role, converts 2C-methyl-D-erythritol 2,4-cyclodiphosphate (ME-2,4cPP) into 1-hydroxy-2-methyl-2-(E)-butenyl 4-diphosphate. The sequence is that of 4-hydroxy-3-methylbut-2-en-1-yl diphosphate synthase (flavodoxin) from Actinobacillus pleuropneumoniae serotype 5b (strain L20).